Consider the following 140-residue polypeptide: Ribosome-binding factor A (140 aa).

The tract at residues 115–140 is disordered; sequence EDERQQRGDIPPGSDQQPGSDEQPTG. A compositionally biased stretch (polar residues) spans 128–140; the sequence is SDQQPGSDEQPTG.

Belongs to the RbfA family. As to quaternary structure, monomer. Binds 30S ribosomal subunits, but not 50S ribosomal subunits or 70S ribosomes.

The protein localises to the cytoplasm. Its function is as follows. One of several proteins that assist in the late maturation steps of the functional core of the 30S ribosomal subunit. Associates with free 30S ribosomal subunits (but not with 30S subunits that are part of 70S ribosomes or polysomes). Required for efficient processing of 16S rRNA. May interact with the 5'-terminal helix region of 16S rRNA. The polypeptide is Ribosome-binding factor A (Synechococcus sp. (strain CC9605)).